Here is a 337-residue protein sequence, read N- to C-terminus: uncharacterized protein (337 aa).

It belongs to the NAD(P)-dependent epimerase/dehydratase family.

This is an uncharacterized protein from Escherichia coli (strain K12).